Consider the following 376-residue polypeptide: Mitogen-activated protein kinase 2 (376 aa).

One can recognise a Protein kinase domain in the interval 32–319; sequence YVPIKPIGRG…VTEALQHPYM (288 aa). ATP-binding positions include 38 to 46 and Lys-61; that span reads IGRGAYGVV. Asp-158 functions as the Proton acceptor in the catalytic mechanism. Thr-191 carries the phosphothreonine modification. A TXY motif is present at residues 191 to 193; it reads TEY. Tyr-193 carries the post-translational modification Phosphotyrosine. A Phosphothreonine modification is found at Thr-196.

This sequence belongs to the protein kinase superfamily. CMGC Ser/Thr protein kinase family. MAP kinase subfamily. As to quaternary structure, interacts with MKK3. Dually phosphorylated on Thr-191 and Tyr-193, which activates the enzyme. Phosphorylated on Ser residue. Highest levels in the stem. Present in the leaf, root and flower, but not in seeds.

It carries out the reaction L-seryl-[protein] + ATP = O-phospho-L-seryl-[protein] + ADP + H(+). The catalysed reaction is L-threonyl-[protein] + ATP = O-phospho-L-threonyl-[protein] + ADP + H(+). Activated by threonine and tyrosine phosphorylation. This chain is Mitogen-activated protein kinase 2 (MPK2), found in Arabidopsis thaliana (Mouse-ear cress).